The primary structure comprises 202 residues: Protein Mbar_A1807 (202 aa).

Residues 5 to 196 enclose the AMMECR1 domain; the sequence is VEGRAAVKLA…EKEPCGEVLE (192 aa).

The chain is Protein Mbar_A1807 from Methanosarcina barkeri (strain Fusaro / DSM 804).